The primary structure comprises 861 residues: MSTAEFAQLLENSILSPDQNIRLTSETQLKKLSNDNFLQFAGLSSQVLIDENTKLEGRILAALTLKNELVSKDSVKTQQFAQRWITQVSPEAKNQIKTNALTALVSIEPRIANAAAQLIAAIADIELPHGAWPELMKIMVDNTGAEQPENVKRASLLALGYMCESADPQSQALVSSSNNILIAIVQGAQSTETSKAVRLAALNALADSLIFIKNNMEREGERNYLMQVVCEATQAEDIEVQAAAFGCLCKIMSLYYTFMKPYMEQALYALTIATMKSPNDKVASMTVEFWSTICEEEIDIAYELAQFPQSPLQSYNFALSSIKDVVPNLLNLLTRQNEDPEDDDWNVSMSAGACLQLFAQNCGNHILEPVLEFVEQNITADNWRNREAAVMAFGSIMDGPDKVQRTYYVHQALPSILNLMNDQSLQVKETTAWCIGRIADSVAESIDPQQHLPGVVQACLIGLQDHPKVATNCSWTIINLVEQLAEATPSPIYNFYPALVDGLIGAANRIDNEFNARASAFSALTTMVEYATDTVAETSASISTFVMDKLGQTMSVDENQLTLEDAQSLQELQSNILTVLAAVIRKSPSSVEPVADMLMGLFFRLLEKKDSAFIEDDVFYAISALAASLGKGFEKYLETFSPYLLKALNQVDSPVSITAVGFIADISNSLEEDFRRYSDAMMNVLAQMISNPNARRELKPAVLSVFGDIASNIGADFIPYLNDIMALCVAAQNTKPENGTLEALDYQIKVLEAVLDAYVGIVAGLHDKPEALFPYVGTIFQFIAQVAEDPQLYSEDATSRAAVGLIGDIAAMFPDGSIKQFYGQDWVIDYIKRTRSGQLFSQATKDTARWAREQQKRQLSL.

N-acetylserine is present on serine 2. HEAT repeat units lie at residues 3–35 (TAEF…LSND), 37–66 (FLQF…LTLK), 90–129 (PEAK…ELPH), 134–164 (ELMK…YMCE), 177–208 (SNNI…LADS), 219–255 (EGER…MSLY), 260–306 (KPYM…ELAQ), 317–362 (FALS…AQNC), 367–395 (LEPV…AFGS), 402–442 (KVQR…ADSV), 452–484 (LPGV…VEQL), 496–530 (YPAL…MVEY), 536–586 (AETS…VIRK), 592–629 (EPVA…AASL), 634–669 (EKYL…ISNS), 675–713 (RRYS…ASNI), 718–764 (IPYL…IVAG), 773–812 (FPYV…IAAM), and 819–859 (KQFY…KRQL). One can recognise an Importin N-terminal domain in the interval 25–106 (SETQLKKLSN…KTNALTALVS (82 aa)). At serine 836 the chain carries Phosphoserine.

Belongs to the importin beta family. Importin beta-1 subfamily. In terms of assembly, forms a complex with the importin alpha subunit (SRP1/KAP60). Interacts with Ran (GSP1); interacts specifically with the GTP-bound form of Ran (GTP-Ran), protecting it from GTP hydrolysis and nucleotide exchange. Interacts with nucleoporin NUP1.

It is found in the cytoplasm. It localises to the nucleus. The protein resides in the nuclear pore complex. Importin beta subunit that functions in nuclear protein import through association with the importin alpha subunit, which binds to the classical nuclear localization signal (cNLS) in cargo substrates. Docking of the importin/substrate complex to the nuclear pore complex (NPC) is mediated by importin beta through binding to nucleoporin FxFG repeats and the complex is subsequently translocated through the pore by an energy requiring, Ran-dependent mechanism. At the nucleoplasmic side of the NPC, GTP-Ran binds to importin beta and the three components separate, leading to release of the cargo. Importin alpha and beta are re-exported from the nucleus to the cytoplasm where GTP hydrolysis releases Ran from importin beta. The directionality of nuclear import is thought to be conferred by an asymmetric distribution of the GTP- and GDP-bound forms of Ran between the cytoplasm and nucleus. Mediates the nuclear import of histones H2A and H2B. Mediates the nuclear import of transcription factor GCN4. This chain is Importin subunit beta-1, found in Saccharomyces cerevisiae (strain ATCC 204508 / S288c) (Baker's yeast).